Here is a 485-residue protein sequence, read N- to C-terminus: Probable serine/threonine-protein kinase nek1 (485 aa).

One can recognise a Protein kinase domain in the interval 12-283 (YLIKSQIGSG…TQQILEQVFI (272 aa)). Residues 18–26 (IGSGSYGNT) and Lys41 each bind ATP. The active-site Proton acceptor is the Asp136. The span at 354–365 (KNQQQQSPQKLE) shows a compositional bias: polar residues. Positions 354-419 (KNQQQQSPQK…NNDKNNNINN (66 aa)) are disordered. Residues 366–419 (NNNNNNNDNNNNNNNNNNNNNNNNNNNNNNNNNNNNNNNNNNNNNNDKNNNINN) show a composition bias toward low complexity.

This sequence belongs to the protein kinase superfamily. NEK Ser/Thr protein kinase family. NIMA subfamily.

It carries out the reaction L-seryl-[protein] + ATP = O-phospho-L-seryl-[protein] + ADP + H(+). The catalysed reaction is L-threonyl-[protein] + ATP = O-phospho-L-threonyl-[protein] + ADP + H(+). The protein is Probable serine/threonine-protein kinase nek1 (nek1) of Dictyostelium discoideum (Social amoeba).